The following is a 341-amino-acid chain: GTP 3',8-cyclase (341 aa).

In terms of domain architecture, Radical SAM core spans 11 to 231; it reads QKSRPLRDLR…RIINEDMPIE (221 aa). Position 20 (R20) interacts with GTP. [4Fe-4S] cluster contacts are provided by C27 and C31. Y33 provides a ligand contact to S-adenosyl-L-methionine. Residue C34 coordinates [4Fe-4S] cluster. R75 is a binding site for GTP. G79 contributes to the S-adenosyl-L-methionine binding site. T106 serves as a coordination point for GTP. S130 contacts S-adenosyl-L-methionine. Residue K167 coordinates GTP. M201 is an S-adenosyl-L-methionine binding site. C265 and C268 together coordinate [4Fe-4S] cluster. Residue 270-272 participates in GTP binding; the sequence is RAR. C282 lines the [4Fe-4S] cluster pocket.

The protein belongs to the radical SAM superfamily. MoaA family. In terms of assembly, monomer and homodimer. The cofactor is [4Fe-4S] cluster.

The enzyme catalyses GTP + AH2 + S-adenosyl-L-methionine = (8S)-3',8-cyclo-7,8-dihydroguanosine 5'-triphosphate + 5'-deoxyadenosine + L-methionine + A + H(+). It functions in the pathway cofactor biosynthesis; molybdopterin biosynthesis. Catalyzes the cyclization of GTP to (8S)-3',8-cyclo-7,8-dihydroguanosine 5'-triphosphate. This chain is GTP 3',8-cyclase, found in Bacillus licheniformis (strain ATCC 14580 / DSM 13 / JCM 2505 / CCUG 7422 / NBRC 12200 / NCIMB 9375 / NCTC 10341 / NRRL NRS-1264 / Gibson 46).